A 130-amino-acid chain; its full sequence is Small ribosomal subunit protein uS11 (130 aa).

This sequence belongs to the universal ribosomal protein uS11 family. Part of the 30S ribosomal subunit. Interacts with proteins S7 and S18. Binds to IF-3.

Its function is as follows. Located on the platform of the 30S subunit, it bridges several disparate RNA helices of the 16S rRNA. Forms part of the Shine-Dalgarno cleft in the 70S ribosome. The sequence is that of Small ribosomal subunit protein uS11 from Gloeobacter violaceus (strain ATCC 29082 / PCC 7421).